A 289-amino-acid polypeptide reads, in one-letter code: E3 ubiquitin-protein ligase MARCHF8 (289 aa).

The segment at methionine 1 to threonine 68 is disordered. Residues lysine 25–leucine 39 are compositionally biased toward basic and acidic residues. Positions serine 50 to serine 64 are enriched in low complexity. The segment at valine 70–glutamate 131 adopts an RING-CH-type zinc-finger fold. Zn(2+) is bound by residues cysteine 78, cysteine 81, cysteine 95, cysteine 97, histidine 105, cysteine 108, cysteine 121, and cysteine 124. A run of 2 helical transmembrane segments spans residues cysteine 155–isoleucine 175 and phenylalanine 195–valine 215.

In terms of assembly, interacts with CD86.

Its subcellular location is the golgi apparatus membrane. The protein resides in the endoplasmic reticulum membrane. It is found in the cytoplasmic vesicle membrane. The protein localises to the lysosome membrane. It localises to the early endosome membrane. The catalysed reaction is S-ubiquitinyl-[E2 ubiquitin-conjugating enzyme]-L-cysteine + [acceptor protein]-L-lysine = [E2 ubiquitin-conjugating enzyme]-L-cysteine + N(6)-ubiquitinyl-[acceptor protein]-L-lysine.. It participates in protein modification; protein ubiquitination. Functionally, E3 ubiquitin-protein ligase that plays several important roles in innate immunity and adaptive immunity. Mediates ubiquitination of CD86 and MHC class II proteins, such as HLA-DR alpha and beta, and promotes their subsequent endocytosis and sorting to lysosomes via multivesicular bodies. Possesses a very broad antiviral activity by specifically inactivating different viral fusion proteins. Targets and ubiquitinates cytoplasmic lysine residues of viral envelope glycoproteins with single transmembrane domains leading to their lysosomal degradation. Mediates the regulation of constitutive ubiquitination and trafficking of the viral restriction factor BST2 within the endocytic pathway. Plays a role in maintenance of immune tolerance to self by promoting the turnover and proteasomal degradation of PD-L1/CD274 via ubiquitination. Catalyzes the 'Lys-63'-linked polyubiquitylation of cGAS thereby inhibiting its DNA binding ability and impairing its antiviral innate immunity. Negatively regulates IL7-mediated T-cell homeostasis by mediating 'Lys-27'-linked polyubiquitination of IL7R, leading to its lysosomal degradation. The sequence is that of E3 ubiquitin-protein ligase MARCHF8 (MARCHF8) from Bos taurus (Bovine).